Consider the following 130-residue polypeptide: Histone H2A type 1-D (130 aa).

Positions 1 to 22 (MSGRGKQGGKARAKAKTRSSRA) are disordered. Ser2 carries the N-acetylserine modification. Ser2 carries the post-translational modification Phosphoserine; by RPS6KA5. Citrulline; alternate is present on Arg4. Position 4 is a symmetric dimethylarginine; by PRMT5; alternate (Arg4). N6-(2-hydroxyisobutyryl)lysine; alternate is present on residues Lys6 and Lys10. Lys6 carries the post-translational modification N6-acetyllysine; alternate. Residues 7-19 (QGGKARAKAKTRS) show a composition bias toward basic residues. 2 positions are modified to N6-(beta-hydroxybutyryl)lysine; alternate: Lys10 and Lys14. Position 10 is an N6-lactoyllysine; alternate (Lys10). At Lys10 the chain carries N6-succinyllysine; alternate. A Glycyl lysine isopeptide (Lys-Gly) (interchain with G-Cter in ubiquitin); alternate cross-link involves residue Lys14. Residue Lys16 forms a Glycyl lysine isopeptide (Lys-Gly) (interchain with G-Cter in ubiquitin) linkage. Position 37 is an N6-(2-hydroxyisobutyryl)lysine; alternate (Lys37). Lys37 is subject to N6-(beta-hydroxybutyryl)lysine; alternate. N6-crotonyllysine; alternate is present on Lys37. 2 positions are modified to N6-(2-hydroxyisobutyryl)lysine: Lys75 and Lys76. An N6-(2-hydroxyisobutyryl)lysine; alternate modification is found at Lys96. N6-(beta-hydroxybutyryl)lysine; alternate is present on Lys96. Lys96 is modified (N6-succinyllysine; alternate). Lys96 carries the N6-glutaryllysine; alternate modification. Lys100 bears the N6-glutaryllysine mark. Gln105 carries the N5-methylglutamine modification. At Lys119 the chain carries N6-(2-hydroxyisobutyryl)lysine; alternate. Lys119 carries the N6-(beta-hydroxybutyryl)lysine; alternate modification. 2 positions are modified to N6-crotonyllysine; alternate: Lys119 and Lys120. Residues Lys119 and Lys120 each carry the N6-glutaryllysine; alternate modification. Residue Lys120 forms a Glycyl lysine isopeptide (Lys-Gly) (interchain with G-Cter in ubiquitin); alternate linkage. A Phosphothreonine; by DCAF1 modification is found at Thr121. Residue Lys126 is modified to N6-crotonyllysine; alternate. Residue Lys126 is modified to N6-glutaryllysine; alternate.

It belongs to the histone H2A family. As to quaternary structure, the nucleosome is a histone octamer containing two molecules each of H2A, H2B, H3 and H4 assembled in one H3-H4 heterotetramer and two H2A-H2B heterodimers. The octamer wraps approximately 147 bp of DNA. In terms of processing, deiminated on Arg-4 in granulocytes upon calcium entry. Monoubiquitination of Lys-120 (H2AK119Ub) by RING1, TRIM37 and RNF2/RING2 complex gives a specific tag for epigenetic transcriptional repression and participates in X chromosome inactivation of female mammals. It is involved in the initiation of both imprinted and random X inactivation. Ubiquitinated H2A is enriched in inactive X chromosome chromatin. Ubiquitination of H2A functions downstream of methylation of 'Lys-27' of histone H3 (H3K27me). H2AK119Ub by RNF2/RING2 can also be induced by ultraviolet and may be involved in DNA repair. Monoubiquitination of Lys-120 (H2AK119Ub) by TRIM37 may promote transformation of cells in a number of breast cancers. Following DNA double-strand breaks (DSBs), it is ubiquitinated through 'Lys-63' linkage of ubiquitin moieties by the E2 ligase UBE2N and the E3 ligases RNF8 and RNF168, leading to the recruitment of repair proteins to sites of DNA damage. Ubiquitination at Lys-14 and Lys-16 (H2AK13Ub and H2AK15Ub, respectively) in response to DNA damage is initiated by RNF168 that mediates monoubiquitination at these 2 sites, and 'Lys-63'-linked ubiquitin are then conjugated to monoubiquitin; RNF8 is able to extend 'Lys-63'-linked ubiquitin chains in vitro. Deubiquitinated by USP51 at Lys-14 and Lys-16 (H2AK13Ub and H2AK15Ub, respectively) after damaged DNA is repaired. H2AK119Ub and ionizing radiation-induced 'Lys-63'-linked ubiquitination (H2AK13Ub and H2AK15Ub) are distinct events. Post-translationally, phosphorylation on Ser-2 (H2AS1ph) is enhanced during mitosis. Phosphorylation on Ser-2 by RPS6KA5/MSK1 directly represses transcription. Acetylation of H3 inhibits Ser-2 phosphorylation by RPS6KA5/MSK1. Phosphorylation at Thr-121 (H2AT120ph) by DCAF1 is present in the regulatory region of many tumor suppresor genes and down-regulates their transcription. In terms of processing, glutamine methylation at Gln-105 (H2AQ104me) by FBL is specifically dedicated to polymerase I. It is present at 35S ribosomal DNA locus and impairs binding of the FACT complex. Symmetric dimethylation on Arg-4 by the PRDM1/PRMT5 complex may play a crucial role in the germ-cell lineage. Post-translationally, crotonylation (Kcr) is specifically present in male germ cells and marks testis-specific genes in post-meiotic cells, including X-linked genes that escape sex chromosome inactivation in haploid cells. Crotonylation marks active promoters and enhancers and confers resistance to transcriptional repressors. It is also associated with post-meiotically activated genes on autosomes. In terms of processing, lactylated in macrophages by EP300/P300 by using lactoyl-CoA directly derived from endogenous or exogenous lactate, leading to stimulates gene transcription.

The protein resides in the nucleus. It localises to the chromosome. Its function is as follows. Core component of nucleosome. Nucleosomes wrap and compact DNA into chromatin, limiting DNA accessibility to the cellular machineries which require DNA as a template. Histones thereby play a central role in transcription regulation, DNA repair, DNA replication and chromosomal stability. DNA accessibility is regulated via a complex set of post-translational modifications of histones, also called histone code, and nucleosome remodeling. The protein is Histone H2A type 1-D of Homo sapiens (Human).